Reading from the N-terminus, the 216-residue chain is Ribosomal RNA large subunit methyltransferase E (216 aa).

Residues glycine 60, tryptophan 62, aspartate 80, aspartate 96, and aspartate 121 each contribute to the S-adenosyl-L-methionine site. The Proton acceptor role is filled by lysine 161.

It belongs to the class I-like SAM-binding methyltransferase superfamily. RNA methyltransferase RlmE family.

It localises to the cytoplasm. The enzyme catalyses uridine(2552) in 23S rRNA + S-adenosyl-L-methionine = 2'-O-methyluridine(2552) in 23S rRNA + S-adenosyl-L-homocysteine + H(+). Functionally, specifically methylates the uridine in position 2552 of 23S rRNA at the 2'-O position of the ribose in the fully assembled 50S ribosomal subunit. The polypeptide is Ribosomal RNA large subunit methyltransferase E (Pseudomonas fluorescens (strain SBW25)).